A 92-amino-acid chain; its full sequence is Small ribosomal subunit protein uS19c (92 aa).

The protein belongs to the universal ribosomal protein uS19 family.

Its subcellular location is the plastid. It localises to the chloroplast. Its function is as follows. Protein S19 forms a complex with S13 that binds strongly to the 16S ribosomal RNA. The protein is Small ribosomal subunit protein uS19c of Gracilaria tenuistipitata var. liui (Red alga).